Here is a 155-residue protein sequence, read N- to C-terminus: Transcription antitermination protein NusB (155 aa).

This sequence belongs to the NusB family.

Functionally, involved in transcription antitermination. Required for transcription of ribosomal RNA (rRNA) genes. Binds specifically to the boxA antiterminator sequence of the ribosomal RNA (rrn) operons. In Ralstonia nicotianae (strain ATCC BAA-1114 / GMI1000) (Ralstonia solanacearum), this protein is Transcription antitermination protein NusB.